We begin with the raw amino-acid sequence, 60 residues long: Toxin S4C8 (60 aa).

4 disulfide bridges follow: Cys3–Cys22, Cys17–Cys39, Cys41–Cys52, and Cys53–Cys58. Positions 41–48 are important for binding to L-type calcium channels; sequence CPTAMWPY.

Belongs to the three-finger toxin family. Short-chain subfamily. L-type calcium blocker sub-subfamily. As to expression, expressed by the venom gland.

The protein resides in the secreted. Functionally, this specific blocker of the L-type calcium channel (Cav1/CACNA1) is a smooth muscle relaxant and an inhibitor of cardiac contractions. This Dendroaspis jamesoni kaimosae (Eastern Jameson's mamba) protein is Toxin S4C8.